A 344-amino-acid polypeptide reads, in one-letter code: Golgi-associated RAB2 interactor protein 1B (344 aa).

A disordered region spans residues 271–293; that stretch reads FRSSRKVETNKNSSGKDSSREDS.

It belongs to the GARIN family.

The protein resides in the golgi apparatus. Functionally, RAB2B effector protein required for accurate acrosome formation and normal male fertility. In complex with RAB2A/RAB2B, seems to suppress excessive vesicle trafficking during acrosome formation. The chain is Golgi-associated RAB2 interactor protein 1B from Homo sapiens (Human).